Here is a 297-residue protein sequence, read N- to C-terminus: ABSCISIC ACID-INSENSITIVE 5-like protein 2 (297 aa).

Phosphoserine occurs at positions 21, 43, and 81. Disordered stretches follow at residues 100-119 and 138-157; these read IQQN…QPTL and IPGS…SGAG. Phosphothreonine is present on T118. A compositionally biased stretch (gly residues) spans 146–157; sequence PVGGGSAGSGAG. Residues 225-288 form the bZIP domain; sequence VERRQKRMIK…SVPPPDPKRQ (64 aa). The basic motif stretch occupies residues 227–246; the sequence is RRQKRMIKNRESAARSRARK. The leucine-zipper stretch occupies residues 253–267; it reads LEIKVSRLEEENERL. The disordered stretch occupies residues 272–297; the sequence is EVEKILPSVPPPDPKRQLRRTSSAPF.

The protein belongs to the bZIP family. ABI5 subfamily. As to quaternary structure, DNA-binding heterodimer with ABI5/DPBF1, DPBF2 or EEL/DPBF4. Interacts with the AFP proteins AFP1, AFP2, AFP3 and AFP4. As to expression, predominantly expressed in seeds.

It localises to the nucleus. In terms of biological role, binds to the embryo specification element and the ABA-responsive element (ABRE) of the Dc3 gene promoter. Could participate in abscisic acid-regulated gene expression during seed development. The sequence is that of ABSCISIC ACID-INSENSITIVE 5-like protein 2 (DPBF3) from Arabidopsis thaliana (Mouse-ear cress).